The primary structure comprises 618 residues: MPAYRSRTTTHGRNMAGARGLWRATGMKDSDFGKPIIAVVNSFTQFVPGHVHLKDLGQLVAREIEAAGGVAKEFNTIAVDDGIAMGHDGMLYSLPSRELIADSVEYMVNAHCADAMVCISNCDKITPGMLMAAMRLNIPAVFVSGGPMEAGKVVLKGKTHAVDLIDAMVAAADSAMSDEDVQTMERSACPTCGSCSGMFTANSMNCLTEALGLSLPGNGSVLATHSDRKRLFVEAGHTIVDLARRYYEGDDASVLPRNIANFKAFENAMTLDIAMGGSTNTVLHLLAAAREAELDFSMKDIDRLSRRVPCLSKIAPSVSDVHMEDVHRAGGIMAILGELDRAGLLDTSCTTVHSETLGAALARWDIRQSNSESVRTFFRAAPGGVPSQTAFSQDRRYDELDLDREKGVIRDAAHAFSKDGGLAVLYGNIALDGCIVKTAGVDASILTFSGPVKVFESQDDAVSAILTNKIVAGDVVVIRYEGPRGGPGMQEMLYPTSYLKSKGLGKACALITDGRFSGGTSGLSIGHVSPEAAEGGLIGLVRDGDRISIDIPNRTISLDVSEAELAKRGEEERARGEAAWTPKDRKRNVSAALQAYAMLTTSAANGAVRDVKRRFGKN.

Aspartate 81 provides a ligand contact to Mg(2+). Position 122 (cysteine 122) interacts with [2Fe-2S] cluster. Aspartate 123 and lysine 124 together coordinate Mg(2+). N6-carboxylysine is present on lysine 124. Residue cysteine 195 coordinates [2Fe-2S] cluster. Residue glutamate 491 coordinates Mg(2+). The active-site Proton acceptor is serine 517.

It belongs to the IlvD/Edd family. As to quaternary structure, homodimer. [2Fe-2S] cluster is required as a cofactor. Requires Mg(2+) as cofactor.

The catalysed reaction is (2R)-2,3-dihydroxy-3-methylbutanoate = 3-methyl-2-oxobutanoate + H2O. It catalyses the reaction (2R,3R)-2,3-dihydroxy-3-methylpentanoate = (S)-3-methyl-2-oxopentanoate + H2O. The protein operates within amino-acid biosynthesis; L-isoleucine biosynthesis; L-isoleucine from 2-oxobutanoate: step 3/4. It participates in amino-acid biosynthesis; L-valine biosynthesis; L-valine from pyruvate: step 3/4. Functionally, functions in the biosynthesis of branched-chain amino acids. Catalyzes the dehydration of (2R,3R)-2,3-dihydroxy-3-methylpentanoate (2,3-dihydroxy-3-methylvalerate) into 2-oxo-3-methylpentanoate (2-oxo-3-methylvalerate) and of (2R)-2,3-dihydroxy-3-methylbutanoate (2,3-dihydroxyisovalerate) into 2-oxo-3-methylbutanoate (2-oxoisovalerate), the penultimate precursor to L-isoleucine and L-valine, respectively. The sequence is that of Dihydroxy-acid dehydratase from Rhodopseudomonas palustris (strain TIE-1).